A 276-amino-acid chain; its full sequence is MLLRFTKMHGLGNDFMVLDLVSQHAHIQPKHAKMWGDRHTGIGFDQLLIVEAPSNPDVDFRYRIFNSDGSEVEQCGNGARCFARFVLDKRLTAKRQIRVETKGGIIELDVRNDGQIGVNMGAPRLVPADIPFQAPEQALSYQVDVDGTPVDLAAVSMGNPHAVLRVSDINTAPVHELGPKIEHHPRFPARVNVGFLQVIDRHRAQLRVWERGAGETQACGTGACAAAVAAISQGWMDSPLLIDLPGGRLSIEWAGPGQPVLMTGPAVRVYEGQVRL.

Positions 13, 46, and 66 each coordinate substrate. Cys75 (proton donor) is an active-site residue. Substrate is bound by residues 76-77 (GN), Asn159, Asn192, and 210-211 (ER). Cys219 (proton acceptor) is an active-site residue. 220 to 221 (GT) provides a ligand contact to substrate.

It belongs to the diaminopimelate epimerase family. Homodimer.

The protein resides in the cytoplasm. It catalyses the reaction (2S,6S)-2,6-diaminopimelate = meso-2,6-diaminopimelate. It functions in the pathway amino-acid biosynthesis; L-lysine biosynthesis via DAP pathway; DL-2,6-diaminopimelate from LL-2,6-diaminopimelate: step 1/1. Catalyzes the stereoinversion of LL-2,6-diaminopimelate (L,L-DAP) to meso-diaminopimelate (meso-DAP), a precursor of L-lysine and an essential component of the bacterial peptidoglycan. The polypeptide is Diaminopimelate epimerase (Pseudomonas fluorescens (strain Pf0-1)).